The following is a 226-amino-acid chain: MADAALKRGPGRGRFVTFEGGEGAGKSTQIKMLADRLEKDGVRVVLTREPGGSPGAEIMRHLVLSGMGKLLGAEAETLLFAAARDDHVRNVILPALNQGSWVLCDRFFDSTRAYQGSQGKVAPDVLNAMQRVTIGDLKPDLTLILDVPVEVGLQRASARRGSGAPDRFESEDIKFHKGLRDAFHKIAATEPRRCVLIDATASAEAVSNIVWDAVRERLFTAVAAAS.

ATP is bound at residue 20–27 (GGEGAGKS).

This sequence belongs to the thymidylate kinase family.

The catalysed reaction is dTMP + ATP = dTDP + ADP. Phosphorylation of dTMP to form dTDP in both de novo and salvage pathways of dTTP synthesis. The polypeptide is Thymidylate kinase (Bradyrhizobium sp. (strain ORS 278)).